The primary structure comprises 857 residues: Trehalose transporter 1 (857 aa).

2 disordered regions span residues 1–28 and 62–202; these read MSGR…KLKE and DPFL…QKAT. The Cytoplasmic portion of the chain corresponds to 1–392; it reads MSGRDNRGAG…VYRPTTNPIY (392 aa). Alanine 9 is modified (phosphothreonine). At glycine 12 the chain carries Phosphoserine. A compositionally biased stretch (polar residues) spans 69 to 81; the sequence is VSPQRHPQNTVRT. Residues 134-143 are compositionally biased toward basic and acidic residues; sequence EIREHRDRQQ. The span at 171 to 181 shows a compositional bias: polar residues; sequence GNSNTNSNKAA. Serine 248, serine 249, and serine 250 each carry phosphoserine. Disordered regions lie at residues 249-269 and 280-299; these read SSEE…HQSL and VLQG…EHKR. 2 positions are modified to phosphoserine: serine 320 and serine 322. The tract at residues 327 to 346 is disordered; sequence LTSRQHFQQQRSISTDSRKS. The segment covering 330–341 has biased composition (polar residues); the sequence is RQHFQQQRSIST. A helical membrane pass occupies residues 393 to 413; the sequence is IWTQVLAALSVSLGSLVVGFV. Topologically, residues 414–440 are extracellular; it reads SAYTSPALVSMTDRNITSFEVTQDAGS. Asparagine 428 is a glycosylation site (N-linked (GlcNAc...) asparagine). A helical membrane pass occupies residues 441 to 461; it reads WVGGIMPLAGLAGGIAGGPLI. Over 462-473 the chain is Cytoplasmic; sequence EYLGRRNTILAT. Residues 474–494 form a helical membrane-spanning segment; it reads AVPFIVSSLLIACAVNVAMVL. The Extracellular segment spans residues 495–497; sequence CGR. Residues 498-518 traverse the membrane as a helical segment; sequence FLAGFCVGIASLSLPVYLGET. The Cytoplasmic segment spans residues 519–528; it reads VQPEVRGTLG. Residues 529-549 traverse the membrane as a helical segment; the sequence is LLPTAFGNIGILLCFVAGSFM. Asparagine 550 carries an N-linked (GlcNAc...) asparagine glycan. Over 550–552 the chain is Extracellular; that stretch reads NWS. The helical transmembrane segment at 553–573 threads the bilayer; sequence MLAFLGAALPVPFLILMFLIP. At 574 to 636 the chain is on the cytoplasmic side; that stretch reads ETPRWFVGRG…ELLKLNNLKP (63 aa). Residues 637-657 traverse the membrane as a helical segment; that stretch reads LSISLGLMFFQQFSGINAVIF. Topologically, residues 658–673 are extracellular; the sequence is YTVQIFKDAGSTIDGN. A helical transmembrane segment spans residues 674–694; the sequence is LCTIIVGIVNFLATFIGIVLI. At 695 to 700 the chain is on the cytoplasmic side; it reads DRAGRK. Residues 701 to 721 form a helical membrane-spanning segment; sequence ILLYVSDIAMVLTLFVLGGFF. Topologically, residues 722–740 are extracellular; it reads YCKTYGPDVSHLGWLPLTC. Residues 741–761 traverse the membrane as a helical segment; sequence FVIYILGFSLGFGPIPWLMMG. Residues 762 to 767 are Cytoplasmic-facing; sequence EILPAK. Residues 768-788 traverse the membrane as a helical segment; the sequence is IRGSAASVATAFNWFCTFVVT. The Extracellular segment spans residues 789–801; it reads KTFQDLTVAMGAH. Residues 802–822 traverse the membrane as a helical segment; that stretch reads GAFWLFGAICFVGLFFVIIYV. Over 823 to 857 the chain is Cytoplasmic; that stretch reads PETQGKTLEDIERKMMGRVRRMSSVANIKPLSFNM. A phosphoserine mark is found at serine 845 and serine 846.

The protein belongs to the major facilitator superfamily. Sugar transporter (TC 2.A.1.1) family. Trehalose transporter subfamily. As to expression, expressed in perineurial glia of the outer layer of the nervous system that forms the blood brain barrier (at protein level). Expressed in the fat body (at protein level). May be specifically expressed in perineurial glia (at protein level). In terms of tissue distribution, may be specifically expressed in the fat body (at protein level).

The protein localises to the cell membrane. Its subcellular location is the vesicle. It carries out the reaction alpha,alpha-trehalose(in) = alpha,alpha-trehalose(out). It catalyses the reaction D-glucose(out) = D-glucose(in). Functionally, low-capacity facilitative transporter for trehalose. Can also transport glucose. Does not transport maltose, sucrose, lactose or fructose. Mediates the bidirectional transfer of trehalose. Responsible for the transport of trehalose synthesized in the fat body and the incorporation of trehalose into other tissues that require a carbon source, thereby regulating trehalose levels in the hemolymph. Required in glial cells of the blood brain barrier to fuel glycolysis but not required in neurons. Neurons rely on the citric acid cycle for their energy needs and utilise alanine and lactate, by-products of glial cell glycolysis released into the hemolymph, as fuel. Increased expression in glial cells of the blood brain barrier during starvation and increased cell surface localization enhances carbohydrate uptake to protect the central nervous system from restricted nutrient availability. This Drosophila melanogaster (Fruit fly) protein is Trehalose transporter 1.